A 318-amino-acid polypeptide reads, in one-letter code: Pyrimidine-specific ribonucleoside hydrolase RihA (318 aa).

The active site involves His-240.

This sequence belongs to the IUNH family. RihA subfamily.

Hydrolyzes cytidine or uridine to ribose and cytosine or uracil, respectively. In Shewanella baltica (strain OS155 / ATCC BAA-1091), this protein is Pyrimidine-specific ribonucleoside hydrolase RihA.